The primary structure comprises 343 residues: Phosphate acyltransferase (343 aa).

Belongs to the PlsX family. As to quaternary structure, homodimer. Probably interacts with PlsY.

It localises to the cytoplasm. It catalyses the reaction a fatty acyl-[ACP] + phosphate = an acyl phosphate + holo-[ACP]. It participates in lipid metabolism; phospholipid metabolism. Functionally, catalyzes the reversible formation of acyl-phosphate (acyl-PO(4)) from acyl-[acyl-carrier-protein] (acyl-ACP). This enzyme utilizes acyl-ACP as fatty acyl donor, but not acyl-CoA. The protein is Phosphate acyltransferase of Coxiella burnetii (strain CbuG_Q212) (Coxiella burnetii (strain Q212)).